Here is a 101-residue protein sequence, read N- to C-terminus: MIPGELFIEDGEIELNAGRKTVTLTVSNTGDRPIQVGSHYHFFETNPALKFDRDKARGMRLDIAAGTAVRFEPGQSRDVQLVELAGKRTIYGFRGDVMGKL.

Belongs to the urease beta subunit family. Heterotrimer of UreA (gamma), UreB (beta) and UreC (alpha) subunits. Three heterotrimers associate to form the active enzyme.

The protein resides in the cytoplasm. It catalyses the reaction urea + 2 H2O + H(+) = hydrogencarbonate + 2 NH4(+). It functions in the pathway nitrogen metabolism; urea degradation; CO(2) and NH(3) from urea (urease route): step 1/1. In Rhodopseudomonas palustris (strain ATCC BAA-98 / CGA009), this protein is Urease subunit beta.